Consider the following 898-residue polypeptide: Chitin synthase 1 (898 aa).

Positions 1–154 are disordered; that stretch reads MDPRYGAQPM…PPQQGGGIQR (154 aa). Residues 9-21 show a composition bias toward pro residues; the sequence is PMPPRRSPSPGHP. Composition is skewed to polar residues over residues 64–75 and 136–146; these read DHLSLNAAQSVD and DVPSEQYQDPP. A run of 5 helical transmembrane segments spans residues 441–461, 540–560, 570–590, 616–636, and 651–671; these read SAFG…YVAL, RWLN…LDFL, FAFF…WFAI, ILGV…FVLS, and MCWF…FISV. N-linked (GlcNAc...) asparagine glycosylation occurs at asparagine 685. The next 4 membrane-spanning stretches (helical) occupy residues 697-717, 726-746, 825-845, and 870-890; these read MLII…LIML, FAQY…YAFC, GVVL…LSSA, and IVLW…MWFL.

This sequence belongs to the chitin synthase family. Class I subfamily.

Its subcellular location is the cell membrane. It catalyses the reaction [(1-&gt;4)-N-acetyl-beta-D-glucosaminyl](n) + UDP-N-acetyl-alpha-D-glucosamine = [(1-&gt;4)-N-acetyl-beta-D-glucosaminyl](n+1) + UDP + H(+). Polymerizes chitin, a structural polymer of the cell wall and septum, by transferring the sugar moiety of UDP-GlcNAc to the non-reducing end of the growing chitin polymer. Shows additive effects in septum formation with CHS2, CHS3A, CHS4, CHS5, CHS6 and CHS7. Regulates mycelial growth and conidiation. Involved in virulence and mediates mycotoxin deoxinivalenol (DON) biosynthesis via the regulation of the expression of TRI4, TRI5 and TRI6. The sequence is that of Chitin synthase 1 from Gibberella zeae (strain ATCC MYA-4620 / CBS 123657 / FGSC 9075 / NRRL 31084 / PH-1) (Wheat head blight fungus).